Reading from the N-terminus, the 346-residue chain is Dihydroorotase (346 aa).

Residues histidine 14 and histidine 16 each coordinate Zn(2+). Residues 16–18 (HLR) and asparagine 42 each bind substrate. Lysine 100, histidine 137, and histidine 175 together coordinate Zn(2+). Residue lysine 100 is modified to N6-carboxylysine. Substrate is bound at residue histidine 137. Leucine 220 contributes to the substrate binding site. A Zn(2+)-binding site is contributed by aspartate 248. The active site involves aspartate 248. Substrate contacts are provided by histidine 252 and alanine 264.

Belongs to the metallo-dependent hydrolases superfamily. DHOase family. Class II DHOase subfamily. In terms of assembly, homodimer. Zn(2+) serves as cofactor.

The enzyme catalyses (S)-dihydroorotate + H2O = N-carbamoyl-L-aspartate + H(+). The protein operates within pyrimidine metabolism; UMP biosynthesis via de novo pathway; (S)-dihydroorotate from bicarbonate: step 3/3. Catalyzes the reversible cyclization of carbamoyl aspartate to dihydroorotate. This Ruegeria sp. (strain TM1040) (Silicibacter sp.) protein is Dihydroorotase.